The chain runs to 212 residues: N-(5'-phosphoribosyl)anthranilate isomerase (212 aa).

Belongs to the TrpF family.

It catalyses the reaction N-(5-phospho-beta-D-ribosyl)anthranilate = 1-(2-carboxyphenylamino)-1-deoxy-D-ribulose 5-phosphate. The protein operates within amino-acid biosynthesis; L-tryptophan biosynthesis; L-tryptophan from chorismate: step 3/5. This is N-(5'-phosphoribosyl)anthranilate isomerase from Cereibacter sphaeroides (strain ATCC 17029 / ATH 2.4.9) (Rhodobacter sphaeroides).